We begin with the raw amino-acid sequence, 394 residues long: Nuclear hormone receptor family member nhr-103 (394 aa).

Positions Ser8 to Thr83 form a DNA-binding region, nuclear receptor. An NR C4-type zinc finger spans residues Cys11 to Cys31. The segment at Gln47–Cys66 adopts an NR C4-type; degenerate zinc-finger fold. The region spanning Tyr126–Thr394 is the NR LBD domain.

It belongs to the nuclear hormone receptor family.

The protein resides in the nucleus. Its function is as follows. Orphan nuclear receptor. This is Nuclear hormone receptor family member nhr-103 (nhr-103) from Caenorhabditis elegans.